The sequence spans 184 residues: Ribosome-recycling factor (184 aa).

Belongs to the RRF family.

It localises to the cytoplasm. In terms of biological role, responsible for the release of ribosomes from messenger RNA at the termination of protein biosynthesis. May increase the efficiency of translation by recycling ribosomes from one round of translation to another. This is Ribosome-recycling factor from Acholeplasma laidlawii (strain PG-8A).